Consider the following 496-residue polypeptide: Glycerol kinase (496 aa).

T12 is an ADP binding site. Residues T12, T13, and S14 each coordinate ATP. T12 serves as a coordination point for sn-glycerol 3-phosphate. Residue R16 participates in ADP binding. Sn-glycerol 3-phosphate-binding residues include R82, E83, Y134, and D244. The glycerol site is built by R82, E83, Y134, D244, and Q245. ADP contacts are provided by T266 and G309. ATP contacts are provided by T266, G309, Q313, and G410. ADP is bound by residues G410 and N414.

This sequence belongs to the FGGY kinase family.

It carries out the reaction glycerol + ATP = sn-glycerol 3-phosphate + ADP + H(+). The protein operates within polyol metabolism; glycerol degradation via glycerol kinase pathway; sn-glycerol 3-phosphate from glycerol: step 1/1. Inhibited by fructose 1,6-bisphosphate (FBP). Key enzyme in the regulation of glycerol uptake and metabolism. Catalyzes the phosphorylation of glycerol to yield sn-glycerol 3-phosphate. This is Glycerol kinase from Treponema denticola (strain ATCC 35405 / DSM 14222 / CIP 103919 / JCM 8153 / KCTC 15104).